The primary structure comprises 437 residues: MKKTHITEQKFADLGLKPQVTEGLEKKGFEYCTPIQALALPVLLTGQDIAGQAQTGTGKTLAFLTATFNHLLTTPEHEGRKPTQPRAIIMAPTRELAIQIFNDAAPLIASTGLKAALAYGGESYDKQLAKLQDGVDILIGTTGRIIDFYKQRVFNLNNIQAVVLDEADRMFDLGFIKDIRFLFRRMPEPKERLNMLFSATLSYRVQELAFEHMHNPEHVVVEPEQKTGHRIQEELFYPSNEDKMALLQTLIEEEWPDRAIVFANTKHKCESIWGHLAADGHRVGLLTGDVPQKKREKILEQFTRGEVDLLVATDVAARGLHIPQVTHVFNFDLPDDCEDYVHRIGRTGRAGASGHSISFACEDYAINLPPIEEYIEHAIPVSDYDASALIQDLPAPLRMRAPRTQQRRTNTGGTRSGNRKPQGRRPRQPRQSAPKQS.

Positions 9 to 37 (QKFADLGLKPQVTEGLEKKGFEYCTPIQA) match the Q motif motif. The region spanning 40-219 (LPVLLTGQDI…FEHMHNPEHV (180 aa)) is the Helicase ATP-binding domain. Residue 53-60 (AQTGTGKT) coordinates ATP. A DEAD box motif is present at residues 165–168 (DEAD). The region spanning 245–390 (ALLQTLIEEE…VSDYDASALI (146 aa)) is the Helicase C-terminal domain. The disordered stretch occupies residues 395–437 (APLRMRAPRTQQRRTNTGGTRSGNRKPQGRRPRQPRQSAPKQS). Over residues 403–413 (RTQQRRTNTGG) the composition is skewed to low complexity. Residues 417 to 428 (GNRKPQGRRPRQ) show a composition bias toward basic residues.

It belongs to the DEAD box helicase family. RhlB subfamily. Component of the RNA degradosome, which is a multiprotein complex involved in RNA processing and mRNA degradation.

The protein localises to the cytoplasm. It carries out the reaction ATP + H2O = ADP + phosphate + H(+). In terms of biological role, DEAD-box RNA helicase involved in RNA degradation. Has RNA-dependent ATPase activity and unwinds double-stranded RNA. This is ATP-dependent RNA helicase RhlB from Vibrio campbellii (strain ATCC BAA-1116).